Consider the following 129-residue polypeptide: Fluoride-specific ion channel FluC 2 (129 aa).

The next 4 helical transmembrane spans lie at 3-23 (FLYV…MNLW), 32-52 (ATLA…RFLA), 59-79 (LVLL…FSAF), and 90-110 (GAWL…LIMV). Positions 71 and 74 each coordinate Na(+).

This sequence belongs to the fluoride channel Fluc/FEX (TC 1.A.43) family.

Its subcellular location is the cell membrane. It carries out the reaction fluoride(in) = fluoride(out). Na(+) is not transported, but it plays an essential structural role and its presence is essential for fluoride channel function. Functionally, fluoride-specific ion channel. Important for reducing fluoride concentration in the cell, thus reducing its toxicity. The chain is Fluoride-specific ion channel FluC 2 from Listeria monocytogenes serovar 1/2a (strain ATCC BAA-679 / EGD-e).